We begin with the raw amino-acid sequence, 173 residues long: Large ribosomal subunit protein uL15 (173 aa).

A compositionally biased stretch (basic and acidic residues) spans 1-11; it reads MKLNEIRDNQG. The interval 1 to 50 is disordered; that stretch reads MKLNEIRDNQGARKSRVRVGRGIGSGLGKTGGRGQKGQKSRSGVSINGFE. Positions 21 to 35 are enriched in gly residues; that stretch reads RGIGSGLGKTGGRGQ.

Belongs to the universal ribosomal protein uL15 family. Part of the 50S ribosomal subunit.

Its function is as follows. Binds to the 23S rRNA. The sequence is that of Large ribosomal subunit protein uL15 from Rhizorhabdus wittichii (strain DSM 6014 / CCUG 31198 / JCM 15750 / NBRC 105917 / EY 4224 / RW1) (Sphingomonas wittichii).